We begin with the raw amino-acid sequence, 142 residues long: Large ribosomal subunit protein uL11 (142 aa).

It belongs to the universal ribosomal protein uL11 family. As to quaternary structure, part of the ribosomal stalk of the 50S ribosomal subunit. Interacts with L10 and the large rRNA to form the base of the stalk. L10 forms an elongated spine to which L12 dimers bind in a sequential fashion forming a multimeric L10(L12)X complex. In terms of processing, one or more lysine residues are methylated.

Its function is as follows. Forms part of the ribosomal stalk which helps the ribosome interact with GTP-bound translation factors. This is Large ribosomal subunit protein uL11 from Yersinia pestis bv. Antiqua (strain Angola).